The sequence spans 266 residues: U2 small nuclear ribonucleoprotein A' (266 aa).

LRR repeat units lie at residues 30-51 (ILRN…NHLA), 53-74 (PTHI…HHRD), 75-95 (DIET…ALLP), and 97-118 (KLKS…IPLS). The LRRCT domain occupies 132–170 (NPICHLSEYRQRILALVPSLEVLDFKLVSQAEKAQAVKD).

This sequence belongs to the U2 small nuclear ribonucleoprotein A family. As to quaternary structure, associated with the spliceosome.

The protein resides in the nucleus. Involved in pre-mRNA splicing. This chain is U2 small nuclear ribonucleoprotein A' (LEA1), found in Candida glabrata (strain ATCC 2001 / BCRC 20586 / JCM 3761 / NBRC 0622 / NRRL Y-65 / CBS 138) (Yeast).